We begin with the raw amino-acid sequence, 162 residues long: Endoribonuclease YbeY (162 aa).

Zn(2+) contacts are provided by H117, H121, and H127.

This sequence belongs to the endoribonuclease YbeY family. It depends on Zn(2+) as a cofactor.

It localises to the cytoplasm. In terms of biological role, single strand-specific metallo-endoribonuclease involved in late-stage 70S ribosome quality control and in maturation of the 3' terminus of the 16S rRNA. This Francisella tularensis subsp. mediasiatica (strain FSC147) protein is Endoribonuclease YbeY.